The primary structure comprises 334 residues: Probable quinone oxidoreductase (334 aa).

The protein belongs to the zinc-containing alcohol dehydrogenase family. Quinone oxidoreductase subfamily.

The catalysed reaction is 2 a quinone + NADPH + H(+) = 2 a 1,4-benzosemiquinone + NADP(+). This is Probable quinone oxidoreductase (ZTA1) from Saccharomyces cerevisiae (strain ATCC 204508 / S288c) (Baker's yeast).